Consider the following 556-residue polypeptide: Urocanate hydratase (556 aa).

Residues 53-54 (GG), Q131, 177-179 (GMG), E197, 243-244 (NA), 264-268 (QTSAH), 274-275 (YL), and Y323 contribute to the NAD(+) site. C411 is an active-site residue. Position 493 (G493) interacts with NAD(+).

Belongs to the urocanase family. It depends on NAD(+) as a cofactor.

The protein localises to the cytoplasm. It catalyses the reaction 4-imidazolone-5-propanoate = trans-urocanate + H2O. It functions in the pathway amino-acid degradation; L-histidine degradation into L-glutamate; N-formimidoyl-L-glutamate from L-histidine: step 2/3. Catalyzes the conversion of urocanate to 4-imidazolone-5-propionate. The protein is Urocanate hydratase of Pseudomonas fluorescens (strain SBW25).